Reading from the N-terminus, the 667-residue chain is Probable sulfate permease C320.05 (667 aa).

Residues 1 to 27 (MSSPSENHLLGPKTSFIDNRTSTSRPL) form a disordered region. Residues 16-25 (FIDNRTSTSR) are compositionally biased toward polar residues. A run of 12 helical transmembrane segments spans residues 77 to 97 (IIWDVLAGCSTACLSVPIALS), 102 to 122 (FLGVPPIYILTGTAIGPILYC), 162 to 182 (ILVTGLIAFIAGIINLAAGLF), 198 to 218 (GCILSISMIIMINQGSVFFGF), 240 to 260 (MSKANIYTTILSCITISLLIG), 275 to 295 (IVSIPDAVIILLLGSFLSKKF), 301 to 321 (YGIAILGEIKTTILLPKLPLP), 336 to 356 (GVMCSFLAFIDTVIAVKAISL), 368 to 388 (LISLGAANIGSSLFCGLPICG), 405 to 425 (VATIACSVLILLATFFIMPVF), 433 to 453 (LASMVVSLGVSLFADAAVEIF), and 465 to 485 (GIIFSIATCTMMFGLETGIIF). Residues 532–657 (SSTAVESAPR…DHVQDSIKKV (126 aa)) form the STAS domain.

Belongs to the SLC26A/SulP transporter (TC 2.A.53) family.

The protein resides in the endoplasmic reticulum membrane. In terms of biological role, possible sulfate transporter. The polypeptide is Probable sulfate permease C320.05 (Schizosaccharomyces pombe (strain 972 / ATCC 24843) (Fission yeast)).